Consider the following 325-residue polypeptide: Zinc metalloproteinase/disintegrin (325 aa).

A propeptide spanning residues 1–39 (KYENVEKGDEAPKKCGVTHTNLESDEPIEKASQLFGTSE) is cleaved from the precursor. Gln-40 is modified (pyrrolidone carboxylic acid). A Peptidase M12B domain is found at 46–242 (RHIELVIVAD…HNPQRILNEP (197 aa)). A Zn(2+)-binding site is contributed by His-182. Glu-183 is an active-site residue. The Zn(2+) site is built by His-186 and His-192. 2 disulfides stabilise this stretch: Cys-197–Cys-221 and Cys-199–Cys-204. A propeptide spanning residues 243–257 (LRTDTVSTPVYGNVL) is cleaved from the precursor. A Disintegrin domain is found at 250–322 (TPVYGNVLQN…SECESNPWNF (73 aa)). Position 258 is a pyrrolidone carboxylic acid (Gln-258). Intrachain disulfides connect Cys-264-Cys-287, Cys-278-Cys-284, Cys-283-Cys-308, and Cys-296-Cys-315. Residues 300-302 (RGD) carry the Cell attachment site motif.

The protein belongs to the venom metalloproteinase (M12B) family. P-II subfamily. P-IIe sub-subfamily. As to quaternary structure, heterodimer of bitisgabonin and gabonin-1 (bitisgabonin-1) or gabonin-2 (bitisgabonin-2); disulfide-linked. Zn(2+) is required as a cofactor. Expressed by the venom gland.

Its subcellular location is the secreted. Its function is as follows. Impairs hemostasis in the envenomed animal. In dimer with gabonin-1 (bitisgabonin-1), is a potent inhibitor of the adhesion of the RGD-dependent integrin alpha-5/beta-1 (ITGA5/ITGB1) to immobilized fibronectin. Functionally, in dimer with gabonin-2 (bitisgabonin-2), preferentially inhibits the adhesion of the alpha-4/beta-1 (ITGA4/ITGB1) and alpha-9/beta-1 (ITGA9/ITGB1) integrins to VCAM-1 and also acts as a strong antagonist of alpha-5/beta-1 (ITGA5/ITGB1). In Bitis gabonica (Gaboon adder), this protein is Zinc metalloproteinase/disintegrin.